The following is a 599-amino-acid chain: Adenine deaminase (599 aa).

The tract at residues 1–31 is disordered; it reads MARSNRRGGRGDPEDDPAWAPPGHRCAGERA.

The protein belongs to the metallo-dependent hydrolases superfamily. Adenine deaminase family. Mn(2+) serves as cofactor.

The catalysed reaction is adenine + H2O + H(+) = hypoxanthine + NH4(+). In Methanopyrus kandleri (strain AV19 / DSM 6324 / JCM 9639 / NBRC 100938), this protein is Adenine deaminase.